The following is a 213-amino-acid chain: Transcription antitermination protein NusB (213 aa).

This sequence belongs to the NusB family.

Functionally, involved in transcription antitermination. Required for transcription of ribosomal RNA (rRNA) genes. Binds specifically to the boxA antiterminator sequence of the ribosomal RNA (rrn) operons. This chain is Transcription antitermination protein NusB, found in Synechococcus elongatus (strain ATCC 33912 / PCC 7942 / FACHB-805) (Anacystis nidulans R2).